The chain runs to 341 residues: Dihydroorotate dehydrogenase (quinone) (341 aa).

FMN contacts are provided by residues 59-63 and T83; that span reads AGLDK. A substrate-binding site is contributed by K63. 108-112 provides a ligand contact to substrate; sequence NRMGF. FMN contacts are provided by N136 and N169. N169 provides a ligand contact to substrate. S172 acts as the Nucleophile in catalysis. Residue N174 participates in substrate binding. The FMN site is built by K214 and T242. 243–244 is a binding site for substrate; it reads NT. FMN contacts are provided by residues G265, G294, and 315-316; that span reads YS.

The protein belongs to the dihydroorotate dehydrogenase family. Type 2 subfamily. In terms of assembly, monomer. It depends on FMN as a cofactor.

It localises to the cell membrane. The catalysed reaction is (S)-dihydroorotate + a quinone = orotate + a quinol. It functions in the pathway pyrimidine metabolism; UMP biosynthesis via de novo pathway; orotate from (S)-dihydroorotate (quinone route): step 1/1. In terms of biological role, catalyzes the conversion of dihydroorotate to orotate with quinone as electron acceptor. The sequence is that of Dihydroorotate dehydrogenase (quinone) from Neisseria meningitidis serogroup C (strain 053442).